Consider the following 237-residue polypeptide: Sugar fermentation stimulation protein homolog (237 aa).

Belongs to the SfsA family.

The protein is Sugar fermentation stimulation protein homolog of Methylobacterium radiotolerans (strain ATCC 27329 / DSM 1819 / JCM 2831 / NBRC 15690 / NCIMB 10815 / 0-1).